Reading from the N-terminus, the 107-residue chain is Small integral membrane protein 19 (107 aa).

Residues alanine 25–alanine 43 traverse the membrane as a helical segment.

This sequence belongs to the SMIM19 family.

It localises to the membrane. The chain is Small integral membrane protein 19 (SMIM19) from Homo sapiens (Human).